The chain runs to 481 residues: Arf-GAP domain and FG repeat-containing protein 2 (481 aa).

In terms of domain architecture, Arf-GAP spans 27 to 153 (EVWCRRVREL…WYVPPDQVKG (127 aa)). The C4-type zinc finger occupies 47–70 (CFECAQRGVTYVDITVGSFVCTTC). Disordered regions lie at residues 150–220 (QVKG…SVKK), 271–309 (SSVF…APAS), and 431–481 (QQNG…NPFL). Positions 157–166 (TKGSASTPVQ) are enriched in polar residues. Residue K173 is modified to N6-acetyllysine. Composition is skewed to polar residues over residues 188–210 (VAAS…ARST), 283–298 (ASFQ…SQGT), and 454–481 (AGIS…NPFL).

As to quaternary structure, interacts with EPS15R.

The protein is Arf-GAP domain and FG repeat-containing protein 2 (AGFG2) of Homo sapiens (Human).